The following is a 199-amino-acid chain: Large ribosomal subunit protein bL25 (199 aa).

The protein belongs to the bacterial ribosomal protein bL25 family. CTC subfamily. As to quaternary structure, part of the 50S ribosomal subunit; part of the 5S rRNA/L5/L18/L25 subcomplex. Contacts the 5S rRNA. Binds to the 5S rRNA independently of L5 and L18.

Functionally, this is one of the proteins that binds to the 5S RNA in the ribosome where it forms part of the central protuberance. The protein is Large ribosomal subunit protein bL25 of Chlorobaculum tepidum (strain ATCC 49652 / DSM 12025 / NBRC 103806 / TLS) (Chlorobium tepidum).